A 563-amino-acid chain; its full sequence is Secreted lipase ARB07186/07185 (563 aa).

The signal sequence occupies residues 1 to 20 (MAKYDFVMLWILTLTAAIAA). The cysteines at positions 83 and 101 are disulfide-linked. S215 acts as the Acyl-ester intermediate in catalysis. C268 and C281 are disulfide-bonded.

It belongs to the type-B carboxylesterase/lipase family.

Its subcellular location is the secreted. It catalyses the reaction a triacylglycerol + H2O = a diacylglycerol + a fatty acid + H(+). This Arthroderma benhamiae (strain ATCC MYA-4681 / CBS 112371) (Trichophyton mentagrophytes) protein is Secreted lipase ARB07186/07185.